The primary structure comprises 416 residues: Choline/ethanolaminephosphotransferase 1 (416 aa).

The tract at residues M1–V20 is disordered. A Phosphoserine modification is found at S18. T40 bears the Phosphothreonine mark. N86 is a CDP-choline binding site. 2 consecutive transmembrane segments (helical) span residues T89–P108 and L116–D133. A Mg(2+)-binding site is contributed by D133. N-linked (GlcNAc...) asparagine glycosylation is present at N144. E151 serves as a coordination point for CDP-choline. D154 provides a ligand contact to Mg(2+). The active-site Proton acceptor is the H155. The next 8 membrane-spanning stretches (helical) occupy residues G156 to G176, D180 to Q199, I210 to G230, M246 to R267, V286 to K306, H315 to L334, T349 to F363, and D368 to C388. Residue D158 coordinates Mg(2+).

This sequence belongs to the CDP-alcohol phosphatidyltransferase class-I family. In terms of assembly, homodimer. It depends on Mg(2+) as a cofactor. The cofactor is Mn(2+).

Its subcellular location is the endoplasmic reticulum membrane. The protein localises to the nucleus membrane. It carries out the reaction CDP-ethanolamine + a 1,2-diacyl-sn-glycerol = a 1,2-diacyl-sn-glycero-3-phosphoethanolamine + CMP + H(+). It catalyses the reaction CDP-choline + a 1,2-diacyl-sn-glycerol = a 1,2-diacyl-sn-glycero-3-phosphocholine + CMP + H(+). The enzyme catalyses 1-O-alkyl-2-acyl-sn-glycerol + CDP-choline = a 1-O-alkyl-2-acyl-sn-glycero-3-phosphocholine + CMP + H(+). The catalysed reaction is a 1-O-(1Z-alkenyl)-2-acyl-sn-glycerol + CDP-choline = a 1-O-(1Z-alkenyl)-2-acyl-sn-glycero-3-phosphocholine + CMP + H(+). It carries out the reaction 1,2-dioctanoyl-sn-glycerol + CDP-choline = 1,2-dioctanoyl-sn-glycero-3-phosphocholine + CMP + H(+). It catalyses the reaction 1,2-didecanoyl-sn-glycerol + CDP-choline = 1,2-didecanoyl-sn-glycero-3-phosphocholine + CMP + H(+). The enzyme catalyses CDP-choline + 1,2-di-(9Z-octadecenoyl)-sn-glycerol = 1,2-di-(9Z-octadecenoyl)-sn-glycero-3-phosphocholine + CMP + H(+). The catalysed reaction is 1-hexadecanoyl-2-(9Z-octadecenoyl)-sn-glycerol + CDP-choline = 1-hexadecanoyl-2-(9Z-octadecenoyl)-sn-glycero-3-phosphocholine + CMP + H(+). It carries out the reaction CDP-ethanolamine + 1,2-di-(9Z-octadecenoyl)-sn-glycerol = 1,2-di-(9Z-octadecenoyl)-sn-glycero-3-phosphoethanolamine + CMP + H(+). It catalyses the reaction 1-hexadecanoyl-2-(9Z-octadecenoyl)-sn-glycerol + CDP-ethanolamine = 1-hexadecanoyl-2-(9Z-octadecenoyl)-sn-glycero-3-phosphoethanolamine + CMP + H(+). The enzyme catalyses 1-hexadecanoyl-2-(4Z,7Z,10Z,13Z,16Z,19Z-docosahexaenoyl)-sn-glycerol + CDP-choline = 1-hexadecanoyl-2-(4Z,7Z,10Z,13Z,16Z,19Z-docosahexaenoyl)-sn-glycero-3-phosphocholine + CMP + H(+). The catalysed reaction is 1,2-di-(9Z-hexadecenoyl)-sn-glycerol + CDP-choline = 1,2-di-(9Z-hexadecenoyl)-sn-glycero-3-phosphocholine + CMP + H(+). It carries out the reaction 1,2-di-(9Z-hexadecenoyl)-sn-glycerol + CDP-ethanolamine = 1,2-di-(9Z-hexadecenoyl)-sn-glycero-3-phosphoethanolamine + CMP + H(+). It catalyses the reaction 1-O-hexadecyl-2-acetyl-sn-glycerol + CDP-choline = 1-O-hexadecyl-2-acetyl-sn-glycero-3-phosphocholine + CMP + H(+). The enzyme catalyses 1-O-hexadecyl-2-(5Z,8Z,11Z,14Z-eicosatetraenoyl)-sn-glycerol + CDP-choline = 1-O-hexadecyl-2-(5Z,8Z,11Z,14Z)-eicosatetraenoyl-sn-glycero-3-phosphocholine + CMP + H(+). It functions in the pathway phospholipid metabolism; phosphatidylethanolamine biosynthesis; phosphatidylethanolamine from ethanolamine: step 3/3. The protein operates within phospholipid metabolism; phosphatidylcholine biosynthesis; phosphatidylcholine from phosphocholine: step 2/2. Catalyzes both phosphatidylcholine and phosphatidylethanolamine biosynthesis from CDP-choline and CDP-ethanolamine, respectively. Involved in protein-dependent process of phospholipid transport to distribute phosphatidyl choline to the lumenal surface. Has a higher cholinephosphotransferase activity than ethanolaminephosphotransferase activity. This Mus musculus (Mouse) protein is Choline/ethanolaminephosphotransferase 1.